A 586-amino-acid polypeptide reads, in one-letter code: Proton channel OTOP1 (586 aa).

Over 1 to 52 the chain is Cytoplasmic; it reads MVEHGGTDSMWLNKYNPAAASSASSSSSSDAENKLFSRLKVSLTKKYPQKNA. The helical transmembrane segment at 53 to 74 threads the bilayer; the sequence is ELLSAQYGTNLLLLGVSVMLAL. Residues 75–82 lie on the Extracellular side of the membrane; sequence AAQSGPVK. The helical transmembrane segment at 83-106 threads the bilayer; sequence EEHLLSFITVLMLVQLVWMLCYMI. The Cytoplasmic portion of the chain corresponds to 107 to 124; sequence RRERERSPVPERDAHAGA. Residues 125 to 147 traverse the membrane as a helical segment; it reads SWIRGGLTMLALLSLIMDAFRIG. The Extracellular segment spans residues 148–157; sequence YFVGYHSCIS. Residues 158-182 form a helical membrane-spanning segment; the sequence is AALGVYPIVHALHTISQVHFLWFHI. The Cytoplasmic segment spans residues 183–190; the sequence is KDVIKKYE. The chain crosses the membrane as a helical span at residues 191-217; it reads TFERFGVIHAVFTNLLLWCNGVMSETE. The Extracellular segment spans residues 218-255; it reads HFMHNHRRRLIEMGYANLSTVDVQPHCNCTTSVCSMFS. A helical membrane pass occupies residues 256–281; sequence TSLYYLYPFNIEYHIFVSAMLFVMWK. Topologically, residues 282 to 303 are cytoplasmic; it reads NIGRTLDRHSNRKRRSTGSTGL. Residues 304–326 traverse the membrane as a helical segment; sequence LLGPLGGLVALASSVSVLVVYLI. The Extracellular segment spans residues 327 to 336; it reads HLEKTEEMHE. A helical transmembrane segment spans residues 337–362; the sequence is AAVSMFYYYGVAMMACMCVGSGTGLL. Residues 363 to 380 are Cytoplasmic-facing; that stretch reads VYRMENRPMDTGSNPART. The chain crosses the membrane as a helical span at residues 381-405; it reads LDTELLLASSLGSWLMSWCSVVASV. Over 406–417 the chain is Extracellular; that stretch reads AEAGQKSPSFSW. The chain crosses the membrane as a helical span at residues 418–438; the sequence is TSLTYSLLLVLEKCIQNLFIV. Residues 439–518 are Cytoplasmic-facing; the sequence is ESLYRRHSEE…TPGRKRQILK (80 aa). Residues 484-505 are disordered; sequence PAAGSHALSRKQPDAPLPAGQR. Residues 519–537 traverse the membrane as a helical segment; sequence NICMFLFMCNISLWILPAF. Topologically, residues 538-555 are extracellular; the sequence is GCRPQYDNPLENETFGTS. The chain crosses the membrane as a helical span at residues 556 to 579; the sequence is VWTTVLNVAIPLNLFYRMHSVASL. Residues 580-586 lie on the Cytoplasmic side of the membrane; sequence FEVFRKV.

It belongs to the otopetrin family. As to quaternary structure, homodimer.

The protein localises to the cell membrane. The protein resides in the cell projection. Its subcellular location is the microvillus. The enzyme catalyses H(+)(in) = H(+)(out). With respect to regulation, activated by both acid and alkali, with proton influx in response to extracellular acid and proton efflux during alkali stimulation. Inhibited by Zn(2+); this inhibition is thought to be pH-sensitive. Currents evoked in response to mild acid (pH 6.0) stimulus may also be mildly potentiated by exposure to Zn(2+). Activated by NH(4)Cl. Its function is as follows. Proton-selective ion channel. Biphasically modulated by acid and alkali, mediating proton influx and efflux in response to extracellular acid and base stimulation, respectively. May be involved in acid and base perception. Sensor for ammonium chloride (NH(4)Cl) in taste receptor cells. NH(4)Cl acts by increasing the intracellular pH, thereby generating a driving force for proton entry through OTOP1 channel. Plays a role in the regulation of Ca(2+) flux in response to purigenic (ATP, ADP and UDP) stimuli, leading to increase in cytosolic Ca(2+) due to influx of extracellular calcium. May play this role by inhibiting P2Y purinoceptor-mediated Ca(2+) release in a Ca(2+)-dependent manner and promote an influx of Ca(2+) in response to ATP. Through this mechanism and possibly others, plays a role in the formation and function of calcium carbonate-based structures in the vestibular system of the inner ear, called otoconia, that sense gravity and linear acceleration. In Danio rerio (Zebrafish), this protein is Proton channel OTOP1.